The chain runs to 97 residues: Co-chaperonin GroES (97 aa).

Belongs to the GroES chaperonin family. In terms of assembly, heptamer of 7 subunits arranged in a ring. Interacts with the chaperonin GroEL.

It is found in the cytoplasm. Its function is as follows. Together with the chaperonin GroEL, plays an essential role in assisting protein folding. The GroEL-GroES system forms a nano-cage that allows encapsulation of the non-native substrate proteins and provides a physical environment optimized to promote and accelerate protein folding. GroES binds to the apical surface of the GroEL ring, thereby capping the opening of the GroEL channel. The sequence is that of Co-chaperonin GroES from Aeromonas salmonicida.